Here is a 263-residue protein sequence, read N- to C-terminus: MATGGEMTSAEIIHHHMVNLTVGEGFWALHLDTLFFSILLGCSFCWLFYSIGKKAESGVPGFAQNVAEMVFDFIDNTVKGFFGESRSDIGSLALTLFCWIFFWNVMDLIPVDLLPSMAKLIGIPYLKIVPSTDPNATFALSISVVLITLVYTFRNNHGLLGMLRAMGTHPFESSGLIGKILLFPANFALRIVEDMAKIVSLSLRLFGNLFAGEIVFILITFLPFWSQWVPGGAWAIFHILVVTLQAYVFMILTIVYMSMVEKH.

The next 5 membrane-spanning stretches (helical) occupy residues 31–51 (LDTL…FYSI), 89–109 (IGSL…MDLI), 133–153 (DPNA…VYTF), 205–225 (LFGN…LPFW), and 235–255 (AIFH…LTIV).

This sequence belongs to the ATPase A chain family. As to quaternary structure, F-type ATPases have 2 components, CF(1) - the catalytic core - and CF(0) - the membrane proton channel. CF(1) has five subunits: alpha(3), beta(3), gamma(1), delta(1), epsilon(1). CF(0) has three main subunits: a(1), b(2) and c(9-12). The alpha and beta chains form an alternating ring which encloses part of the gamma chain. CF(1) is attached to CF(0) by a central stalk formed by the gamma and epsilon chains, while a peripheral stalk is formed by the delta and b chains.

It localises to the cell inner membrane. Functionally, key component of the proton channel; it plays a direct role in the translocation of protons across the membrane. This Dichelobacter nodosus (strain VCS1703A) protein is ATP synthase subunit a.